Reading from the N-terminus, the 249-residue chain is Probable phosphatase Shal_1519 (249 aa).

Zn(2+) is bound by residues histidine 8, histidine 10, histidine 16, histidine 41, glutamate 74, histidine 102, histidine 132, aspartate 193, and histidine 195.

This sequence belongs to the PHP family. Requires Zn(2+) as cofactor.

The chain is Probable phosphatase Shal_1519 from Shewanella halifaxensis (strain HAW-EB4).